A 2624-amino-acid polypeptide reads, in one-letter code: Transcription factor TFIIIB component B'' homolog (2624 aa).

Residues 1-142 (MFRRARLSVK…TKEKQPCSDR (142 aa)) form a disordered region. An interaction with ZBTB43 region spans residues 1–299 (MFRRARLSVK…TYSSFRKNYY (299 aa)). A compositionally biased stretch (basic and acidic residues) spans 63-77 (PQEKAPRSSTEKTGG). Over residues 99–119 (SSTSSLVKSSVSVPSESHPLS) the composition is skewed to low complexity. Over residues 120–132 (TINQEAPQPTATS) the composition is skewed to polar residues. The segment covering 133–142 (TKEKQPCSDR) has biased composition (basic and acidic residues). A coiled-coil region spans residues 144 to 177 (RIYKAQKLREMLKEELRKEKKQWKNKYAINESQR). A disordered region spans residues 193–241 (LPDNNPMTSSLEQEKKTEKPSTPVQTREQEGKSTPNAEDNEMEEETDDG). Residues 212–229 (PSTPVQTREQEGKSTPNA) show a composition bias toward polar residues. Acidic residues predominate over residues 230 to 240 (EDNEMEEETDD). A Myb-like domain is found at 295-345 (RKNYYSKPWSNKETDMFFLAISMVGTDFSMIGQLFPHRARIEIKNKFKREE). Residues 355–470 (AFQEKRPFDF…QKKRRRKKQD (116 aa)) form a required for phosphorylation by CSNK2A1 region. Disordered regions lie at residues 379–449 (EKRK…SRED), 544–567 (LSLS…TSDL), 606–663 (ENVK…MNTL), and 729–759 (EEIG…SRKD). The span at 397–407 (TKPRKNVKVKK) shows a compositional bias: basic residues. Residues 552–565 (ATSVATESSESSTS) show a composition bias toward low complexity. Composition is skewed to basic and acidic residues over residues 637 to 663 (TESE…MNTL) and 736 to 759 (EKNE…SRKD). A 1; approximate repeat occupies 823-877 (GRREISSKEEVLEKILVSGEMAAALRETVRLDTSPKEMVPAEINTKEMQSDLKET). Residues 823–1327 (GRREISSKEE…PRENELEETS (505 aa)) are 9 X 55 AA repeats of G-R-R-X-I-S-P-X-E-N-G-X-E-E-V-K-P-X-X-E-M-E-T-D-L-K-X-T-G-R-E-X-X-X-R-E-K-T-X-E-X-X-D-A-X-E-E-I-D-X-D-L-E-E-T. A run of 6 repeats spans residues 878–932 (GRRA…LEEA), 933–987 (GRRE…LEET), 988–1040 (GRRK…LEET), 1041–1094 (EREV…LEET), 1095–1148 (EREI…LEET), and 1149–1203 (GRRE…LEET). Residue T915 is modified to Phosphothreonine. Composition is skewed to basic and acidic residues over residues 930–957 (EEAG…ETDL) and 979–1006 (EIDK…KPVD). The tract at residues 930–1222 (EEAGRREISP…GPEEVKPVGK (293 aa)) is disordered. Residues 1030 to 1041 (DATEEIDLEETE) show a composition bias toward acidic residues. Residues 1052 to 1079 (EEVKPLGEMETDLKATGRDSFPRGKTPE) show a composition bias toward basic and acidic residues. Positions 1078–1103 (PEVIDAIEEIEIDLEETEREISPQEN) form a coiled coil. Residues 1082–1095 (DAIEEIEIDLEETE) show a composition bias toward acidic residues. Positions 1120–1133 (ATGREISPREKTPE) are enriched in basic and acidic residues. Residues 1136–1145 (DATEEIDKDL) show a composition bias toward acidic residues. Over residues 1161–1190 (EEVKPVDEMETDLKTTGREGSSREKTREVI) the composition is skewed to basic and acidic residues. Residues 1194–1204 (EVIETDLEETE) show a composition bias toward acidic residues. An 8; approximate repeat occupies 1204-1257 (EREISPQENGPEEVKPVGKMETDLKEIREEISQREKVLAEFSAIREKEIDLKET). A coiled-coil region spans residues 1223-1284 (METDLKEIRE…VEEMEADLKE (62 aa)). The 9; approximate repeat unit spans residues 1258 to 1327 (GKRDIPIMEK…PRENELEETS (70 aa)). Positions 1306–1321 (AELKQTGKTDISPREN) are enriched in basic and acidic residues. 10 disordered regions span residues 1306 to 1348 (AELK…SAVP), 1365 to 1440 (TPVE…RFKR), 1519 to 1543 (TERN…VQKN), 1684 to 1722 (KAKP…LQKG), 1819 to 1863 (STSE…ASKA), 2130 to 2164 (GAEM…ENKD), 2181 to 2200 (SEVN…QEVH), 2207 to 2241 (VASS…GDSV), 2444 to 2501 (FQSR…SRPG), and 2519 to 2566 (SDEP…PSPS). Residues 1326–1344 (TSTSRQTDTHLMQSGSNDF) show a composition bias toward polar residues. Basic and acidic residues predominate over residues 1366-1378 (PVEEKRNSEKEVS). 3 stretches are compositionally biased toward polar residues: residues 1379–1390 (SHFSHFKISSQT), 1411–1421 (SDINLSKSLPQ), and 1519–1529 (TERNLSPSNSC). Over residues 1695-1719 (KKEEPVLEKVTTDQSKEGKPEDHLL) the composition is skewed to basic and acidic residues. Residues 1844-1853 (RGSKRVRGKT) are compositionally biased toward basic residues. Residues 2131-2151 (AEMETQRETEKNASKATELEN) are compositionally biased toward basic and acidic residues. A compositionally biased stretch (basic and acidic residues) spans 2470-2479 (VSDKEERTDA). A compositionally biased stretch (low complexity) spans 2488 to 2498 (SRTSSSKASLS). The segment covering 2526-2544 (HSKKRLKPLIPGLRKKLKR) has biased composition (basic residues).

As to quaternary structure, component of TFIIIB complex. The TFIIIB complex has two activities, alpha and beta. The TFIIIB-alpha and TFIIIB-beta activities are required for transcription of genes with TFIIIC-bound internal promoters and PSE transcription factor-bound external promoters, respectively. The TFIIIB-alpha activity complex is composed of TBP, BDP1, and a complex containing both BRF2 and at least four stably associated proteins; YY1 facilitates the formation of TFIIIB-alpha activity complex. The TFIIIB-beta activity complex is composed of TBP, BDP1, and BRF1. Interacts with BRF1; this interaction diminishes during mitosis resulting in the release of BDP1 from chromosomal templates. Component of TFIIIC complex. The TFIIIC complex has two activities, C1 and C2. The TFIIIC2 activity complex is only required for transcription of the 'classical' pol III genes whereas the TFIIIC1 activity complex is required for transcription of all pol III genes. The TFIIIC1 activity complex is composed at least of BDP1. Interacts with ZBTB43. Post-translationally, phosphorylated by CSNK2A1 during mitosis, resulting in its release from chromatin and suppression of polymerase III transcription. As to expression, isoform 2 is highly expressed in cerebellum.

It is found in the nucleus. Its function is as follows. General activator of RNA polymerase III transcription. Requires for transcription from all three types of polymerase III promoters. Requires for transcription of genes with internal promoter elements and with promoter elements upstream of the initiation site. This is Transcription factor TFIIIB component B'' homolog (BDP1) from Homo sapiens (Human).